The sequence spans 188 residues: Phosphatidylinositol N-acetylglucosaminyltransferase subunit H (188 aa).

It belongs to the PIGH family. In terms of assembly, component of the glycosylphosphatidylinositol-N-acetylglucosaminyltransferase (GPI-GnT) complex composed at least by PIGA, PIGC, PIGH, PIGP, PIGQ, PIGY and DPM2. Interacts with PIGQ.

The protein localises to the cytoplasm. Its pathway is glycolipid biosynthesis; glycosylphosphatidylinositol-anchor biosynthesis. Its function is as follows. Part of the glycosylphosphatidylinositol-N-acetylglucosaminyltransferase (GPI-GnT) complex that catalyzes the transfer of N-acetylglucosamine from UDP-N-acetylglucosamine to phosphatidylinositol and participates in the first step of GPI biosynthesis. This Bos taurus (Bovine) protein is Phosphatidylinositol N-acetylglucosaminyltransferase subunit H.